We begin with the raw amino-acid sequence, 101 residues long: Interleukin-8 (101 aa).

Residues 1–22 form the signal peptide; sequence MTSKLAVALLAAFVLSAALCEA. Arg27 carries the post-translational modification Citrulline. Cystine bridges form between Cys34–Cys61 and Cys36–Cys77.

This sequence belongs to the intercrine alpha (chemokine CxC) family. Homodimer. Interacts with TNFAIP6 (via Link domain); this interaction interferes with chemokine binding to glycosaminoglycans. Post-translationally, citrullination at Arg-27 prevents proteolysis, and dampens tissue inflammation, it also enhances leukocytosis, possibly through impaired chemokine clearance from the blood circulation.

The protein localises to the secreted. Chemotactic factor that mediates inflammatory response by attracting neutrophils, basophils, and T-cells to clear pathogens and protect the host from infection. Also plays an important role in neutrophil activation. Released in response to an inflammatory stimulus, exerts its effect by binding to the G-protein-coupled receptors CXCR1 and CXCR2, primarily found in neutrophils, monocytes and endothelial cells. G-protein heterotrimer (alpha, beta, gamma subunits) constitutively binds to CXCR1/CXCR2 receptor and activation by IL8 leads to beta and gamma subunits release from Galpha (GNAI2 in neutrophils) and activation of several downstream signaling pathways including PI3K and MAPK pathways. The protein is Interleukin-8 (CXCL8) of Canis lupus familiaris (Dog).